The primary structure comprises 210 residues: MVDFKMTKEGLILLIKDYQNLEEVLNAISARITQMGGFFAKGDRISLMIENHNKHSQDIPKIVSHLRNLGLEVSQILVGSTVEGKENDLRVQSRTTVESTGKVIKRNIRSGQTVVHSGDVIVFGNVNKGAEILAGGSVVVFGKAQGNIRAGLNEGEQAVVAALDLQTSLIQIAGFITHSKGEENVPSIAHVKGNRIVIEPFDKVSFERSE.

It belongs to the MinC family. Interacts with MinD and FtsZ.

Cell division inhibitor that blocks the formation of polar Z ring septums. Rapidly oscillates between the poles of the cell to destabilize FtsZ filaments that have formed before they mature into polar Z rings. Prevents FtsZ polymerization. This chain is Probable septum site-determining protein MinC, found in Thermotoga sp. (strain RQ2).